Reading from the N-terminus, the 307-residue chain is Agmatinase (307 aa).

Mn(2+)-binding residues include His128, Asp151, His153, Asp155, Asp232, and Asp234.

The protein belongs to the arginase family. Agmatinase subfamily. It depends on Mn(2+) as a cofactor.

It catalyses the reaction agmatine + H2O = urea + putrescine. The protein operates within amine and polyamine biosynthesis; putrescine biosynthesis via agmatine pathway; putrescine from agmatine: step 1/1. Catalyzes the formation of putrescine from agmatine. The chain is Agmatinase from Neisseria meningitidis serogroup A / serotype 4A (strain DSM 15465 / Z2491).